Here is a 467-residue protein sequence, read N- to C-terminus: Sexual differentiation process putative subtilase-type proteinase isp6 (467 aa).

An Inhibitor I9 domain is found at 86–176 (YIIVLQPDLS…AVERDQVVSI (91 aa)). The Peptidase S8 domain occupies 186–467 (PWGLARISHK…NLLAFNGAQE (282 aa)). Catalysis depends on charge relay system residues Asp221, His253, and Ser409.

Belongs to the peptidase S8 family.

The chain is Sexual differentiation process putative subtilase-type proteinase isp6 (isp6) from Schizosaccharomyces pombe (strain 972 / ATCC 24843) (Fission yeast).